Reading from the N-terminus, the 1872-residue chain is Plexin-A3 (1872 aa).

The N-terminal stretch at 1–19 is a signal peptide; it reads MPTVCLLPLLFFTIGGCLG. In terms of domain architecture, Sema spans 20–489; that stretch reads SSRPFRTFVV…SEKQVSQLPV (470 aa). Residues 20 to 1220 lie on the Extracellular side of the membrane; sequence SSRPFRTFVV…ITADRALTLP (1201 aa). Asn-60 carries an N-linked (GlcNAc...) asparagine glycan. 9 disulfides stabilise this stretch: Cys-78–Cys-87, Cys-113–Cys-121, Cys-267–Cys-388, Cys-283–Cys-339, Cys-357–Cys-376, Cys-492–Cys-509, Cys-498–Cys-540, Cys-501–Cys-518, and Cys-512–Cys-524. Asn-549 carries an N-linked (GlcNAc...) asparagine glycan. A disulfide bridge connects residues Cys-575 and Cys-595. IPT/TIG domains are found at residues 841 to 934, 936 to 1021, 1024 to 1123, and 1126 to 1212; these read PRIT…YSFV, PTFD…YTYT, PTVT…FTYY, and PSFE…LHIT. The N-linked (GlcNAc...) asparagine glycan is linked to Asn-1163. The helical transmembrane segment at 1221 to 1241 threads the bilayer; sequence AMVGLAAGGGLLLLAITVVLV. Positions 1240-1294 form a coiled coil; it reads LVAYKRKTQDADRTLKRLQLQMDNLESRVALECKEAFAELQTDINELTNHMDGVQ. Residues 1242-1872 are Cytoplasmic-facing; that stretch reads AYKRKTQDAD…QIITLVSSSS (631 aa). A Phosphoserine modification is found at Ser-1597.

Belongs to the plexin family. Detected in embryonic hindbrain, spinal cord, dorsal root ganglion, trigeminal ganglion and superior cervical ganglion. In newborns, detected throughout all layers of the hippocampus.

It localises to the cell membrane. In terms of biological role, coreceptor for SEMA3A and SEMA3F. Necessary for signaling by class 3 semaphorins and subsequent remodeling of the cytoskeleton. Plays a role in axon guidance in the developing nervous system. Regulates the migration of sympathetic neurons, but not of neural crest precursors. Required for normal dendrite spine morphology in pyramidal neurons. May play a role in regulating semaphorin-mediated programmed cell death in the developing nervous system. Class 3 semaphorins bind to a complex composed of a neuropilin and a plexin. The plexin modulates the affinity of the complex for specific semaphorins, and its cytoplasmic domain is required for the activation of down-stream signaling events in the cytoplasm. The chain is Plexin-A3 (Plxna3) from Mus musculus (Mouse).